A 574-amino-acid polypeptide reads, in one-letter code: Phosphatidylinositol 4-kinase gamma 3 (574 aa).

Ubiquitin-like domains lie at Pro32–Gln109 and Ala110–Arg188. The PI3K/PI4K catalytic domain maps to Gly257–Glu555. The interval Ser263 to Gly269 is G-loop. Residues Ser264 to Ala270, Lys286, and Gln381 to Val384 each bind ATP. A catalytic loop region spans residues Ala414–Asn422. Positions Pro438–Glu464 are activation loop. Asp440 is an ATP binding site.

Belongs to the PI3/PI4-kinase family. Type II PI4K subfamily.

It carries out the reaction a 1,2-diacyl-sn-glycero-3-phospho-(1D-myo-inositol) + ATP = a 1,2-diacyl-sn-glycero-3-phospho-(1D-myo-inositol 4-phosphate) + ADP + H(+). The phosphorylation of phosphatidylinositol (PI) to PI4P is the first committed step in the generation of phosphatidylinositol 4,5-bisphosphate (PIP2), a precursor of the second messenger inositol 1,4,5-trisphosphate (InsP3). The polypeptide is Phosphatidylinositol 4-kinase gamma 3 (PI4KG3) (Arabidopsis thaliana (Mouse-ear cress)).